A 161-amino-acid chain; its full sequence is Cyclic pyranopterin monophosphate synthase (161 aa).

Substrate is bound by residues 75 to 77 and 115 to 116; these read MCH and ME. The active site involves aspartate 130.

It belongs to the MoaC family. Homohexamer; trimer of dimers.

The enzyme catalyses (8S)-3',8-cyclo-7,8-dihydroguanosine 5'-triphosphate = cyclic pyranopterin phosphate + diphosphate. It participates in cofactor biosynthesis; molybdopterin biosynthesis. In terms of biological role, catalyzes the conversion of (8S)-3',8-cyclo-7,8-dihydroguanosine 5'-triphosphate to cyclic pyranopterin monophosphate (cPMP). This chain is Cyclic pyranopterin monophosphate synthase, found in Bacillus cereus (strain ATCC 10987 / NRS 248).